The chain runs to 840 residues: Phosphatidylglycerol lysyltransferase (840 aa).

The Cytoplasmic segment spans residues 1–8 (MNQEVKNK). A helical membrane pass occupies residues 9–29 (IFSILKITFATALFIFVVITL). Topologically, residues 30–52 (YRELSGINFKDTLVEFSKINRMS) are extracellular. A helical membrane pass occupies residues 53–73 (LVLLFIGGGASLVILSMYDVI). Over 74 to 89 (LSRALKMDISLGKVLR) the chain is Cytoplasmic. The helical transmembrane segment at 90 to 110 (VSYIINALNAIVGFGGFIGAG) threads the bilayer. The Extracellular segment spans residues 111-128 (VRAMVYKNYTHDKKKLVH). The chain crosses the membrane as a helical span at residues 129–149 (FISLILISMLTGLSLLSLLIV). The Cytoplasmic portion of the chain corresponds to 150 to 161 (FHVFDASLILDK). The chain crosses the membrane as a helical span at residues 162–182 (ITWVRWVLYVVSFFLPLFIIY). Residues 183 to 200 (SMVRPPDKNNRFVGLYCT) are Extracellular-facing. The chain crosses the membrane as a helical span at residues 201 to 221 (LVSCVEWLAAAVVLYFCGVIV). The Cytoplasmic portion of the chain corresponds to 222 to 229 (DAHVSFMS). Residues 230–250 (FIAIFIIAALSGLVSFIPGGF) form a helical membrane-spanning segment. Residues 251 to 271 (GAFDLVVLLGFKTLGVPEEKV) are Extracellular-facing. The chain crosses the membrane as a helical span at residues 272–292 (LLMLLLYRFAYYFVPVIIALI). At 293 to 337 (LSSFEFGTSAKKYIEGSKYFIPAKDVTSFLMSYQKDIIAKIPSLS) the chain is on the cytoplasmic side. A helical membrane pass occupies residues 338 to 358 (LAILVFFTSMIFFVNNLTIVY). Residues 359 to 369 (DALYDGNHLTY) lie on the Extracellular side of the membrane. Residues 370–390 (YILLAIHTSACLLLLLNVVGI) form a helical membrane-spanning segment. At 391 to 394 (YKQS) the chain is on the cytoplasmic side. Helical transmembrane passes span 395–415 (RRAIIFAMISILLITVATFFT) and 416–436 (YASYILITWLAIIFVLLIVAF). Topologically, residues 437-450 (RRARRLKRPVRMRN) are cytoplasmic. The helical transmembrane segment at 451-471 (IVAMLLFSLFILYVNHIFIAG) threads the bilayer. The Extracellular segment spans residues 472 to 489 (TLYALDIYTIEMHTSVLR). A helical transmembrane segment spans residues 490 to 510 (YYFWLTILIIAIIIGMIAWLF). Topologically, residues 511-840 (DYQFSKVRIS…SKVMRVIRHK (330 aa)) are cytoplasmic.

The protein belongs to the LPG synthase family.

Its subcellular location is the cell membrane. It catalyses the reaction L-lysyl-tRNA(Lys) + a 1,2-diacyl-sn-glycero-3-phospho-(1'-sn-glycerol) = a 1,2-diacyl-sn-glycero-3-phospho-1'-(3'-O-L-lysyl)-sn-glycerol + tRNA(Lys). Catalyzes the transfer of a lysyl group from L-lysyl-tRNA(Lys) to membrane-bound phosphatidylglycerol (PG), which produces lysylphosphatidylglycerol (LPG), a major component of the bacterial membrane with a positive net charge. LPG synthesis contributes to bacterial virulence as it is involved in the resistance mechanism against cationic antimicrobial peptides (CAMP) produces by the host's immune system (defensins, cathelicidins) and by the competing microorganisms (bacteriocins). In fact, the modification of anionic phosphatidylglycerol with positively charged L-lysine results in repulsion of the peptides. This Staphylococcus aureus (strain MSSA476) protein is Phosphatidylglycerol lysyltransferase (mprF).